The sequence spans 357 residues: D(4) dopamine receptor (357 aa).

At 1-32 (MGNRSAADADGLLAGRGPGTGGGAGSPGAAAA) the chain is on the extracellular side. An N-linked (GlcNAc...) asparagine glycan is attached at asparagine 3. A helical transmembrane segment spans residues 33-55 (LVGGVLLIGAVLAGNALVCVSVA). The Cytoplasmic segment spans residues 56 to 65 (AERALQTPTN). A helical membrane pass occupies residues 66-88 (YFIVSLAAADLLLALLVLPLFVY). A Na(+)-binding site is contributed by aspartate 75. The Extracellular portion of the chain corresponds to 89-104 (SEVQGGVWQFSPGLCD). A disulfide bridge connects residues cysteine 103 and cysteine 180. The chain crosses the membrane as a helical span at residues 105–126 (ALMAMDVMLCTASIFNLCAISA). Position 117 (serine 117) interacts with Na(+). At 127-146 (DRFVAVAVPLSYNRQSGGGR) the chain is on the cytoplasmic side. The chain crosses the membrane as a helical span at residues 147 to 170 (QLLLIGATWLLSAAVAAPVLCGLN). Topologically, residues 171–186 (DARGRDPAVCRLEDRD) are extracellular. Residues 187-208 (YVVYSSVCSFFLPCPVMLLLYW) traverse the membrane as a helical segment. Over 209–284 (ATFRGLRRWE…ITGRERKAMR (76 aa)) the chain is Cytoplasmic. Positions 225-261 (LHGRRPRRPSGPGPPPPEAVETPEAPEAIPTPDATLA) are disordered. The segment covering 233–242 (PSGPGPPPPE) has biased composition (pro residues). Over residues 243–259 (AVETPEAPEAIPTPDAT) the composition is skewed to low complexity. The helical transmembrane segment at 285–307 (VLPVVVGAFLVCWTPFFVVHITG) threads the bilayer. Over 308–316 (ALCPACAVP) the chain is Extracellular. Cysteine 310 and cysteine 313 are joined by a disulfide. Residues 317–339 (PRLVSAVTWLGYVNSALNPLIYT) traverse the membrane as a helical segment. The Cytoplasmic portion of the chain corresponds to 340–357 (VFNAEFRAVFRKALRLCC). Cysteine 357 carries the S-palmitoyl cysteine lipid modification.

The protein belongs to the G-protein coupled receptor 1 family. As to quaternary structure, forms homo- and heterooligomers with DRD2. D4.7 allele exhibits higher affinity for homodimers compared to DRD2 heterodimers, while alleles D42. and 4.4 have similar affinities for both. The interaction with DRD2 may modulate agonist-induced downstream signaling. Interacts with CLIC6. Interacts with GPRASP1. May interact with ADORA2A. Interacts with KLHL12. In terms of processing, polyubiquitinated by the BCR(KLHL12) E3 ubiquitin ligase complex: polyubiquitination does not lead to degradation of DRD4 protein. Post-translationally, palmitoylated. Palmitoylation of the C-terminal Cys is important for normal expression at the cell membrane.

The protein localises to the cell membrane. Its function is as follows. Dopamine receptor responsible for neuronal signaling in the mesolimbic system of the brain, an area of the brain that regulates emotion and complex behavior. Activated by dopamine, but also by epinephrine and norepinephrine, and by numerous synthetic agonists and drugs. Agonist binding triggers signaling via G proteins that inhibit adenylyl cyclase. Modulates the circadian rhythm of contrast sensitivity by regulating the rhythmic expression of NPAS2 in the retinal ganglion cells. The sequence is that of D(4) dopamine receptor (DRD4) from Mustela putorius furo (European domestic ferret).